The sequence spans 367 residues: Apolipoprotein A-V (367 aa).

The signal sequence occupies residues Met-1–Thr-20. Position 56 is a phosphoserine (Ser-56). The segment at Leu-71–Gly-90 is disordered.

This sequence belongs to the apolipoprotein A1/A4/E family. In terms of assembly, interacts with GPIHBP1. Interacts with SORL1; this interaction leads to APOA5 internalization and sorting either to lysosomes and degradation, or to the trans-Golgi network. Post-translationally, phosphorylated by FAM20C in the extracellular medium.

The protein resides in the secreted. It localises to the early endosome. Its subcellular location is the late endosome. The protein localises to the golgi apparatus. It is found in the trans-Golgi network. Minor apolipoprotein mainly associated with HDL and to a lesser extent with VLDL. May also be associated with chylomicrons. Important determinant of plasma triglyceride (TG) levels by both being a potent stimulator of apo-CII lipoprotein lipase (LPL) TG hydrolysis and an inhibitor of the hepatic VLDL-TG production rate (without affecting the VLDL-apoB production rate). Activates poorly lecithin:cholesterol acyltransferase (LCAT) and does not enhance efflux of cholesterol from macrophages. Binds heparin. In Neomonachus schauinslandi (Hawaiian monk seal), this protein is Apolipoprotein A-V (APOA5).